The primary structure comprises 470 residues: AAA-ATPase At5g40000 (470 aa).

Positions 1–30 (MMMMGDSFGSIGSSMASLFFLWATIQQIFP) are cleaved as a signal peptide. 248-255 (GPPGTGKS) provides a ligand contact to ATP.

It belongs to the AAA ATPase family. BCS1 subfamily. Requires Mg(2+) as cofactor.

The catalysed reaction is ATP + H2O = ADP + phosphate + H(+). This is AAA-ATPase At5g40000 from Arabidopsis thaliana (Mouse-ear cress).